Reading from the N-terminus, the 338-residue chain is tRNA pseudouridine synthase D (338 aa).

Catalysis depends on Asp79, which acts as the Nucleophile. A TRUD domain is found at 154-303; it reads GVPNYFGEQR…EEAWRANILY (150 aa).

It belongs to the pseudouridine synthase TruD family.

The catalysed reaction is uridine(13) in tRNA = pseudouridine(13) in tRNA. Responsible for synthesis of pseudouridine from uracil-13 in transfer RNAs. This is tRNA pseudouridine synthase D from Legionella pneumophila (strain Corby).